We begin with the raw amino-acid sequence, 103 residues long: Large ribosomal subunit protein eL21 (103 aa).

It belongs to the eukaryotic ribosomal protein eL21 family.

The polypeptide is Large ribosomal subunit protein eL21 (Sulfurisphaera tokodaii (strain DSM 16993 / JCM 10545 / NBRC 100140 / 7) (Sulfolobus tokodaii)).